The primary structure comprises 133 residues: MPTLHVNVVTPDGKVYEGDVDMVSVKTVEGELGILPRHIPLVAPLTVGAVRLKKGSTVDLVAVSGGFVEVRPDQVTILAEAAELPSDIDVERARSAKERAEKRLQQAKQENIDFKRAELSLRRATNRLDVAGR.

The protein belongs to the ATPase epsilon chain family. In terms of assembly, F-type ATPases have 2 components, CF(1) - the catalytic core - and CF(0) - the membrane proton channel. CF(1) has five subunits: alpha(3), beta(3), gamma(1), delta(1), epsilon(1). CF(0) has three main subunits: a, b and c.

It is found in the cell membrane. Produces ATP from ADP in the presence of a proton gradient across the membrane. The chain is ATP synthase epsilon chain from Halalkalibacterium halodurans (strain ATCC BAA-125 / DSM 18197 / FERM 7344 / JCM 9153 / C-125) (Bacillus halodurans).